A 261-amino-acid chain; its full sequence is Endomucin (261 aa).

Residues methionine 1–serine 18 form the signal peptide. Asparagine 19, asparagine 28, asparagine 98, and asparagine 104 each carry an N-linked (GlcNAc...) asparagine glycan. The Extracellular portion of the chain corresponds to asparagine 19 to serine 190. 2 stretches are compositionally biased toward polar residues: residues threonine 118–threonine 134 and alanine 146–isoleucine 171. A disordered region spans residues threonine 118–alanine 183. N-linked (GlcNAc...) asparagine glycans are attached at residues asparagine 164 and asparagine 178. A helical membrane pass occupies residues isoleucine 191–glycine 211. The Cytoplasmic portion of the chain corresponds to leucine 212–asparagine 261. A Phosphoserine modification is found at serine 237.

Highly O-glycosylated. Sialic acid-rich glycoprotein. Expressed in heart, kidney and lung.

It localises to the cell membrane. The protein localises to the membrane. Its subcellular location is the secreted. Functionally, endothelial sialomucin, also called endomucin or mucin-like sialoglycoprotein, which interferes with the assembly of focal adhesion complexes and inhibits interaction between cells and the extracellular matrix. This is Endomucin (EMCN) from Homo sapiens (Human).